The primary structure comprises 115 residues: Peptidyl-tRNA hydrolase (115 aa).

Belongs to the PTH2 family.

The protein localises to the cytoplasm. The enzyme catalyses an N-acyl-L-alpha-aminoacyl-tRNA + H2O = an N-acyl-L-amino acid + a tRNA + H(+). Functionally, the natural substrate for this enzyme may be peptidyl-tRNAs which drop off the ribosome during protein synthesis. This Archaeoglobus fulgidus (strain ATCC 49558 / DSM 4304 / JCM 9628 / NBRC 100126 / VC-16) protein is Peptidyl-tRNA hydrolase.